The sequence spans 88 residues: Small ribosomal subunit protein uS17 (88 aa).

Belongs to the universal ribosomal protein uS17 family. As to quaternary structure, part of the 30S ribosomal subunit.

One of the primary rRNA binding proteins, it binds specifically to the 5'-end of 16S ribosomal RNA. The chain is Small ribosomal subunit protein uS17 from Yersinia pseudotuberculosis serotype O:1b (strain IP 31758).